The chain runs to 358 residues: Probable D-xylulose reductase A (358 aa).

Cys47, His72, and Glu73 together coordinate Zn(2+). Residue 182-187 (GAGPVG) participates in NAD(+) binding.

This sequence belongs to the zinc-containing alcohol dehydrogenase family. Zn(2+) serves as cofactor.

The catalysed reaction is xylitol + NAD(+) = D-xylulose + NADH + H(+). The protein operates within carbohydrate degradation; L-arabinose degradation via L-arabinitol; D-xylulose 5-phosphate from L-arabinose (fungal route): step 4/5. Its function is as follows. Xylitol dehydrogenase which catalyzes the conversion of xylitol to D-xylulose. Xylose is a major component of hemicelluloses such as xylan. Most fungi utilize D-xylose via three enzymatic reactions, xylose reductase (XR), xylitol dehydrogenase (XDH), and xylulokinase, to form xylulose 5-phosphate, which enters pentose phosphate pathway. This Aspergillus fumigatus (strain CBS 144.89 / FGSC A1163 / CEA10) (Neosartorya fumigata) protein is Probable D-xylulose reductase A (xdhA).